Consider the following 453-residue polypeptide: Ribulose bisphosphate carboxylase large chain (453 aa).

Residues 1 to 2 constitute a propeptide that is removed on maturation; that stretch reads MS. Residue P3 is modified to N-acetylproline. K14 carries the N6,N6,N6-trimethyllysine modification. Residues N123 and T173 each contribute to the substrate site. K175 serves as the catalytic Proton acceptor. K177 is a binding site for substrate. Residues K201, D203, and E204 each contribute to the Mg(2+) site. K201 carries the N6-carboxylysine modification. The active-site Proton acceptor is the H294. Substrate-binding residues include R295, H327, and S379.

It belongs to the RuBisCO large chain family. Type I subfamily. Heterohexadecamer of 8 large chains and 8 small chains; disulfide-linked. The disulfide link is formed within the large subunit homodimers. Mg(2+) serves as cofactor. Post-translationally, the disulfide bond which can form in the large chain dimeric partners within the hexadecamer appears to be associated with oxidative stress and protein turnover.

It is found in the plastid. Its subcellular location is the chloroplast. It catalyses the reaction 2 (2R)-3-phosphoglycerate + 2 H(+) = D-ribulose 1,5-bisphosphate + CO2 + H2O. The catalysed reaction is D-ribulose 1,5-bisphosphate + O2 = 2-phosphoglycolate + (2R)-3-phosphoglycerate + 2 H(+). Functionally, ruBisCO catalyzes two reactions: the carboxylation of D-ribulose 1,5-bisphosphate, the primary event in carbon dioxide fixation, as well as the oxidative fragmentation of the pentose substrate in the photorespiration process. Both reactions occur simultaneously and in competition at the same active site. This Valantia muralis (Wall valantia) protein is Ribulose bisphosphate carboxylase large chain.